We begin with the raw amino-acid sequence, 285 residues long: Cyclin-Y-like protein 1B (285 aa).

In terms of domain architecture, Cyclin N-terminal spans proline 111–isoleucine 209.

It belongs to the cyclin family. Cyclin Y subfamily.

This chain is Cyclin-Y-like protein 1B, found in Homo sapiens (Human).